Here is a 356-residue protein sequence, read N- to C-terminus: Protein ATP1B4 (356 aa).

The Nuclear portion of the chain corresponds to 1–109 (MRRQLRSRRA…SLARTGQSRS (109 aa)). Positions 26-78 (EANHNYLADEEEEAEEEAQVMMVPGLEEEEEEEEGKEEEEEREEEEGQGQSTG) are disordered. 2 stretches are compositionally biased toward acidic residues: residues 33–43 (ADEEEEAEEEA) and 51–72 (LEEE…EEEG). Residues 110–130 (LILVIYFFFYASLAAVITLFI) traverse the membrane as a helical; Signal-anchor for type II membrane protein segment. Over 131-356 (YMLFLAISPY…RIIFTLNIET (226 aa)) the chain is Perinuclear space.

This sequence belongs to the X(+)/potassium ATPases subunit beta family. As to quaternary structure, associates with a SMAD7-transcriptional complex. Interacts with TOR1AIP1. Does not associate with known Na,K-ATPase alpha-subunits. Interacts with SNW1. Expressed in skeletal muscle (at protein level). Expressed during postnatal development in skeletal muscle and heart.

It is found in the nucleus inner membrane. Its function is as follows. May act as a transcriptional coregulator during muscle development through its interaction with SNW1. Has lost its ancestral function as a Na,K-ATPase beta-subunit. The protein is Protein ATP1B4 (Atp1b4) of Mus musculus (Mouse).